Consider the following 303-residue polypeptide: Beta-carotene 3-hydroxylase 2, chloroplastic (303 aa).

The N-terminal 52 residues, 1 to 52, are a transit peptide targeting the chloroplast; the sequence is MAAGLSTIAVTLKPLNRSSFSANHPISTAVFPPSLRFNGFRRRKILTVCFVV. Helical transmembrane passes span 96-116 and 130-150; these read YLIA…MAVY and VLEM…MEFW. The Fatty acid hydroxylase domain occupies 143–270; the sequence is AAVGMEFWAR…KFKGVPYGLF (128 aa). The Histidine box-1 motif lies at 155–160; that stretch reads HRALWH. The Histidine box-2 signature appears at 165 to 171; sequence NMHESHH. Transmembrane regions (helical) follow at residues 180–200 and 206–226; these read LNDV…YYGF and VPGL…AYMF. A Histidine box-3 motif is present at residues 228 to 233; that stretch reads HDGLVH. Positions 254–258 match the Histidine box-4 motif; it reads HQLHH.

The protein belongs to the sterol desaturase family. In terms of assembly, homodimer. In terms of tissue distribution, expressed in leaves, flowers, stems, roots and siliques.

The protein localises to the plastid. The protein resides in the chloroplast membrane. The catalysed reaction is all-trans-beta-carotene + 4 reduced [2Fe-2S]-[ferredoxin] + 2 O2 + 4 H(+) = all-trans-zeaxanthin + 4 oxidized [2Fe-2S]-[ferredoxin] + 2 H2O. Its function is as follows. Nonheme diiron monooxygenase involved in the biosynthesis of xanthophylls. Specific for beta-ring hydroxylations of beta-carotene. Also has a low activity toward the beta- and epsilon-rings of alpha-carotene. No activity with acyclic carotenoids such as lycopene and neurosporene. Uses ferredoxin as an electron donor. The sequence is that of Beta-carotene 3-hydroxylase 2, chloroplastic (BETA-OHASE 2) from Arabidopsis thaliana (Mouse-ear cress).